A 400-amino-acid chain; its full sequence is Na(+)/H(+) antiporter NhaA (400 aa).

11 consecutive transmembrane segments (helical) span residues 9–29 (FLVS…IAMV), 60–80 (LILW…GLEL), 96–116 (VLPA…FYLF), 127–147 (WAIP…ILGA), 155–175 (IFLV…MAIF), 180–200 (LSLI…ALNL), 210–230 (LILG…ATLA), 263–283 (YFVL…GIGL), 294–314 (VILG…FVAI), 327–347 (WISF…SLFI), and 366–386 (VLIA…IASV).

Belongs to the NhaA Na(+)/H(+) (TC 2.A.33) antiporter family.

The protein resides in the cell inner membrane. It catalyses the reaction Na(+)(in) + 2 H(+)(out) = Na(+)(out) + 2 H(+)(in). In terms of biological role, na(+)/H(+) antiporter that extrudes sodium in exchange for external protons. The sequence is that of Na(+)/H(+) antiporter NhaA from Campylobacter curvus (strain 525.92).